Consider the following 179-residue polypeptide: ATP-dependent protease subunit HslV (179 aa).

Thr-6 is an active-site residue. Ser-162, Cys-165, and Thr-168 together coordinate Na(+).

It belongs to the peptidase T1B family. HslV subfamily. As to quaternary structure, a double ring-shaped homohexamer of HslV is capped on each side by a ring-shaped HslU homohexamer. The assembly of the HslU/HslV complex is dependent on binding of ATP.

The protein localises to the cytoplasm. The enzyme catalyses ATP-dependent cleavage of peptide bonds with broad specificity.. With respect to regulation, allosterically activated by HslU binding. Its function is as follows. Protease subunit of a proteasome-like degradation complex believed to be a general protein degrading machinery. This chain is ATP-dependent protease subunit HslV, found in Maridesulfovibrio salexigens (strain ATCC 14822 / DSM 2638 / NCIMB 8403 / VKM B-1763) (Desulfovibrio salexigens).